Consider the following 99-residue polypeptide: Acylphosphatase (99 aa).

The Acylphosphatase-like domain maps to 14–99; that stretch reads AVDVTVTGRV…DQGLRSFGVR (86 aa). Catalysis depends on residues R29 and N47.

The protein belongs to the acylphosphatase family.

It carries out the reaction an acyl phosphate + H2O = a carboxylate + phosphate + H(+). The protein is Acylphosphatase (acyP) of Nocardioides sp. (strain ATCC BAA-499 / JS614).